Reading from the N-terminus, the 164-residue chain is uncharacterized protein (164 aa).

The 129-residue stretch at 1-129 (MGEVRVVGIR…AVLAQAGLLI (129 aa)) folds into the BFN domain.

This is an uncharacterized protein from Mycobacterium tuberculosis (strain CDC 1551 / Oshkosh).